Reading from the N-terminus, the 942-residue chain is DNA mismatch repair protein MutS (942 aa).

613–620 (GPNMAGKS) provides a ligand contact to ATP.

This sequence belongs to the DNA mismatch repair MutS family.

This protein is involved in the repair of mismatches in DNA. It is possible that it carries out the mismatch recognition step. This protein has a weak ATPase activity. The chain is DNA mismatch repair protein MutS from Clostridium botulinum (strain Eklund 17B / Type B).